Here is a 415-residue protein sequence, read N- to C-terminus: Homoserine O-succinyltransferase (415 aa).

One can recognise an AB hydrolase-1 domain in the interval 69-383 (NAVLVCHALN…PHGHDAFLLD (315 aa)). Residue Ser-175 is the Nucleophile of the active site. Arg-245 contributes to the substrate binding site. Residues Asp-344 and His-377 contribute to the active site. A substrate-binding site is contributed by Asp-378.

Belongs to the AB hydrolase superfamily. MetX family. As to quaternary structure, homodimer.

The protein localises to the cytoplasm. It catalyses the reaction L-homoserine + succinyl-CoA = O-succinyl-L-homoserine + CoA. The protein operates within amino-acid biosynthesis; L-methionine biosynthesis via de novo pathway; O-succinyl-L-homoserine from L-homoserine: step 1/1. Its function is as follows. Transfers a succinyl group from succinyl-CoA to L-homoserine, forming succinyl-L-homoserine. This chain is Homoserine O-succinyltransferase, found in Bordetella parapertussis (strain 12822 / ATCC BAA-587 / NCTC 13253).